A 274-amino-acid chain; its full sequence is Thiamine kinase (274 aa).

This sequence belongs to the thiamine kinase family.

The catalysed reaction is thiamine + ATP = thiamine phosphate + ADP + H(+). It functions in the pathway cofactor biosynthesis; thiamine diphosphate biosynthesis; thiamine phosphate from thiamine: step 1/1. Catalyzes the ATP-dependent phosphorylation of thiamine to thiamine phosphate. Is involved in thiamine salvage. The chain is Thiamine kinase from Escherichia coli O17:K52:H18 (strain UMN026 / ExPEC).